A 612-amino-acid polypeptide reads, in one-letter code: Baeyer-Villiger monooxygenase 4 (612 aa).

FAD-binding positions include Glu-99, 107-110, Asp-119, Tyr-125, and Ala-169; that span reads TWYW. 117 to 119 provides a ligand contact to NADP(+); it reads QCD. NADP(+) contacts are provided by residues 253-259, 276-277, and 393-394; these read TGATGVQ, RT, and KR.

This sequence belongs to the FAD-binding monooxygenase family. FAD serves as cofactor.

In terms of biological role, catalyzes a Baeyer-Villiger oxidation reaction, i.e. the insertion of an oxygen atom into a carbon-carbon bond adjacent to a carbonyl, which converts ketones to esters or lactones using NADPH as an electron donor. Has a broad substrate scope and oxidizes different compounds including substituted and unsubstituted alicyclic, bicyclic-, aliphatic-ketones, ketones with an aromatic moiety, and sulfides. The highest activities are measured for 2- and 3-methylcyclohexanone, phenylacetone, bicyclo[3.2.0]hept-2-en-6-one and menthone. Cannot use NADH instead of NADPH. Is not active on benzaldehyde. This chain is Baeyer-Villiger monooxygenase 4, found in Dietzia sp. (strain D5).